A 236-amino-acid polypeptide reads, in one-letter code: Ubiquinone biosynthesis O-methyltransferase (236 aa).

Residues Arg39, Gly59, Asp80, and Met124 each coordinate S-adenosyl-L-methionine.

It belongs to the methyltransferase superfamily. UbiG/COQ3 family.

It catalyses the reaction a 3-demethylubiquinol + S-adenosyl-L-methionine = a ubiquinol + S-adenosyl-L-homocysteine + H(+). It carries out the reaction a 3-(all-trans-polyprenyl)benzene-1,2-diol + S-adenosyl-L-methionine = a 2-methoxy-6-(all-trans-polyprenyl)phenol + S-adenosyl-L-homocysteine + H(+). Its pathway is cofactor biosynthesis; ubiquinone biosynthesis. Functionally, O-methyltransferase that catalyzes the 2 O-methylation steps in the ubiquinone biosynthetic pathway. The polypeptide is Ubiquinone biosynthesis O-methyltransferase (Pseudoalteromonas translucida (strain TAC 125)).